The primary structure comprises 468 residues: Nuclear distribution protein PAC1-2 (468 aa).

Positions 13–45 constitute a LisH domain; the sequence is QAEELHKSIIAYLTSLNLATTANTLRAELNLPE. A coiled-coil region spans residues 66–92; it reads SVIRLQKKVLDLQAENAHLKNEIENAG. WD repeat units follow at residues 118-159, 161-201, 205-251, 254-293, 298-358, 360-399, 404-429, and 430-468; these read GHRL…RTLK, HTKA…KNIR, GHDH…CVKT, GHND…PECR, GHEN…IKVL, GHDN…KCVQ, MFDG…GDAG, and DGTP…IFAN.

This sequence belongs to the WD repeat LIS1/nudF family. As to quaternary structure, self-associates. Interacts with NDL1 and dynein.

It localises to the cytoplasm. Its subcellular location is the cytoskeleton. The protein resides in the spindle pole. Its function is as follows. Positively regulates the activity of the minus-end directed microtubule motor protein dynein. May enhance dynein-mediated microtubule sliding by targeting dynein to the microtubule plus end. Required for nuclear migration during vegetative growth as well as development. Required for retrograde early endosome (EE) transport from the hyphal tip. Required for localization of dynein to the mitotic spindle poles. Recruits additional proteins to the dynein complex at SPBs. The polypeptide is Nuclear distribution protein PAC1-2 (Podospora anserina (strain S / ATCC MYA-4624 / DSM 980 / FGSC 10383) (Pleurage anserina)).